The following is a 450-amino-acid chain: Divalent metal cation transporter MntH (450 aa).

The next 11 helical transmembrane spans lie at Leu-34–Ile-54, Ala-61–Leu-81, Ile-108–Val-128, Ile-141–Met-161, Ala-170–Ser-190, Gly-212–Leu-232, Ile-263–Phe-283, Pro-305–Ala-325, Ser-361–Ile-381, Gln-383–Leu-403, and Val-422–Val-442.

This sequence belongs to the NRAMP family.

Its subcellular location is the cell membrane. Functionally, h(+)-stimulated, divalent metal cation uptake system. The polypeptide is Divalent metal cation transporter MntH (Staphylococcus aureus (strain bovine RF122 / ET3-1)).